Consider the following 313-residue polypeptide: Adhesin MafA 1/2 (313 aa).

Positions 1 to 14 are cleaved as a signal peptide; that stretch reads MKTLLLLIPLVLTA. Residue cysteine 15 is the site of N-palmitoyl cysteine attachment. Cysteine 15 carries S-diacylglycerol cysteine lipidation. The segment covering 282-298 has biased composition (polar residues); it reads GDTTAQNRPDFKQNNGK. Residues 282-313 are disordered; that stretch reads GDTTAQNRPDFKQNNGKNPDVGNEVIRRRKGG.

Belongs to the MafA family.

Its subcellular location is the cell outer membrane. This Neisseria meningitidis serogroup C (strain 053442) protein is Adhesin MafA 1/2 (mafA1).